The following is a 384-amino-acid chain: Probable circularly permuted 1,3-beta-glucanase PGA52 (384 aa).

The signal sequence occupies residues 1–17 (MLFSSLLVSTLVSVATA). Residues asparagine 118, asparagine 128, asparagine 170, asparagine 210, and asparagine 244 are each glycosylated (N-linked (GlcNAc...) asparagine). Positions 254–259 (EFDIFE) match the ExDxxE motif motif. Asparagine 262 and asparagine 318 each carry an N-linked (GlcNAc...) asparagine glycan. Residue serine 361 is the site of GPI-anchor amidated serine attachment. Residues 362–384 (GGVSYQPSFITNLLMTVLTLWVI) constitute a propeptide, removed in mature form.

Belongs to the PGA52 family.

It is found in the cell membrane. It catalyses the reaction Hydrolysis of (1-&gt;3)-beta-D-glucosidic linkages in (1-&gt;3)-beta-D-glucans.. Probable circularly permuted 1,3-beta-glucanase involved in cell wall modification through beta-1,3-glucan network alterations such as increased branching or remodeling. This Candida albicans (strain SC5314 / ATCC MYA-2876) (Yeast) protein is Probable circularly permuted 1,3-beta-glucanase PGA52 (PGA52).